A 72-amino-acid polypeptide reads, in one-letter code: Translational regulator CsrA (72 aa).

It belongs to the CsrA/RsmA family. As to quaternary structure, homodimer; the beta-strands of each monomer intercalate to form a hydrophobic core, while the alpha-helices form wings that extend away from the core.

It localises to the cytoplasm. Functionally, a translational regulator that binds mRNA to regulate translation initiation and/or mRNA stability. Usually binds in the 5'-UTR at or near the Shine-Dalgarno sequence preventing ribosome-binding, thus repressing translation. Its main target seems to be the major flagellin gene, while its function is anatagonized by FliW. This chain is Translational regulator CsrA, found in Lachnoclostridium phytofermentans (strain ATCC 700394 / DSM 18823 / ISDg) (Clostridium phytofermentans).